Reading from the N-terminus, the 878-residue chain is Alanine--tRNA ligase (878 aa).

Zn(2+) is bound by residues histidine 566, histidine 570, cysteine 668, and histidine 672.

It belongs to the class-II aminoacyl-tRNA synthetase family. Requires Zn(2+) as cofactor.

The protein localises to the cytoplasm. It catalyses the reaction tRNA(Ala) + L-alanine + ATP = L-alanyl-tRNA(Ala) + AMP + diphosphate. Its function is as follows. Catalyzes the attachment of alanine to tRNA(Ala) in a two-step reaction: alanine is first activated by ATP to form Ala-AMP and then transferred to the acceptor end of tRNA(Ala). Also edits incorrectly charged Ser-tRNA(Ala) and Gly-tRNA(Ala) via its editing domain. This Bacillus velezensis (strain DSM 23117 / BGSC 10A6 / LMG 26770 / FZB42) (Bacillus amyloliquefaciens subsp. plantarum) protein is Alanine--tRNA ligase.